A 36-amino-acid polypeptide reads, in one-letter code: Peruvianin-1 (36 aa).

The protein belongs to the germin family. As to quaternary structure, homohexamer, possibly consisting of a trimer of dimers. Glycosylated.

Inhibited by iodoacetamide and trans-epoxysuccinyl-L-leucylamido(4-guanidino)butane (E-64) but not by phenylmethylsulfonyl fluoride (PMSF), pepstatin-A, ethylenediamine tetra acetic acid (EDTA) or ethylene glycol tetraacetic acid (EGTA). Its function is as follows. Cysteine protease able to degrade azocasein and benzoyl-arginine-beta-naphtylamide (BANA) in vitro. The sequence is that of Peruvianin-1 from Thevetia peruviana (Yellow oleander).